We begin with the raw amino-acid sequence, 172 residues long: Small ribosomal subunit protein uS5c (172 aa).

One can recognise an S5 DRBM domain in the interval 15–78; the sequence is WEEKVVQVKR…TDAKKHIINV (64 aa).

Belongs to the universal ribosomal protein uS5 family. Part of the 30S ribosomal subunit. Contacts protein S4.

Its subcellular location is the plastid. The protein resides in the chloroplast. In terms of biological role, with S4 and S12 plays an important role in translational accuracy. The polypeptide is Small ribosomal subunit protein uS5c (rps5) (Gracilaria tenuistipitata var. liui (Red alga)).